The primary structure comprises 259 residues: Small ribosomal subunit protein uS2 (259 aa).

This sequence belongs to the universal ribosomal protein uS2 family.

In Streptococcus pneumoniae serotype 4 (strain ATCC BAA-334 / TIGR4), this protein is Small ribosomal subunit protein uS2.